The chain runs to 618 residues: Sodium/iodide cotransporter (618 aa).

Topologically, residues 1 to 14 (MEGAEAGARATFGA) are extracellular. The chain crosses the membrane as a helical span at residues 15-31 (WDYGVFATMLLVSTGIG). At 32-56 (LWVGLARGGQRSADDFFTGGRQLAA) the chain is on the cytoplasmic side. The discontinuously helical transmembrane segment at 57 to 80 (VPVGLSLAASFMSAVQVLGVPAEA) threads the bilayer. Na(+) is bound by residues Ser-69, Val-71, and Gln-72. Val-76 is an iodide binding site. Over 81–84 (ARYG) the chain is Extracellular. The chain crosses the membrane as a helical span at residues 85–105 (LKFLWMCAGQLLNSLLTAFLF). Residue Met-90 participates in iodide binding. The Cytoplasmic portion of the chain corresponds to 106–130 (LPIFYRLGLTSTYQYLELRFSRAVR). A helical membrane pass occupies residues 131–157 (LCGTLQYLVATMLYTGIVIYAPALILN). Tyr-144 contacts Na(+). The Extracellular segment spans residues 158-163 (QVTGLD). Residues 164-181 (IWASLLSTGIICTLYTTV) traverse the membrane as a helical segment. Topologically, residues 182 to 189 (GGMKAVVW) are cytoplasmic. A helical transmembrane segment spans residues 190–208 (TDVFQVVVMLVGFWVILAR). The Extracellular segment spans residues 209–243 (GVILLGGPRNVLSLAQNHSRINLMDFDPDPRSRYT). The discontinuously helical transmembrane segment at 244 to 266 (FWTFIVGGTLVWLSMYGVNQAQV) threads the bilayer. Position 255 (Trp-255) interacts with iodide. Met-258 provides a ligand contact to Na(+). Residues 267–278 (QRYVACHTEGKA) are Cytoplasmic-facing. A helical transmembrane segment spans residues 279–301 (KLALLVNQLGLFLIVASAACCGI). The Extracellular portion of the chain corresponds to 302 to 335 (VMFVYYKDCDPLLTGRISAPDQYMPLLVLDIFED). The helical transmembrane segment at 336 to 363 (LPGVPGLFLACAYSGTLSTASTSINAMA) threads the bilayer. Residues 364–386 (AVTVEDLIKPRMPGLAPRKLVFI) are Cytoplasmic-facing. A helical transmembrane segment spans residues 387 to 408 (SKGLSFIYGSACLTVAALSSLL). Residues 409-411 (GGG) lie on the Extracellular side of the membrane. Residues 412-437 (VLQGSFTVMGVISGPLLGAFTLGMLL) traverse the membrane as a helical segment. Leu-413 contributes to the iodide binding site. Residues Ser-416 and Phe-417 each coordinate Na(+). Position 417 (Phe-417) interacts with iodide. Residues 438 to 441 (PACN) are Cytoplasmic-facing. Residues 442–465 (TPGVLSGLAAGLAVSLWVAVGATL) form a helical membrane-spanning segment. Over 466 to 520 (YPPGEQTMGVLPTSAAGCTNDSVLLGPPGATNASNGIPSSGMDTGRPALADTFYA) the chain is Extracellular. Asn-485 and Asn-497 each carry an N-linked (GlcNAc...) asparagine glycan. The helical transmembrane segment at 521–545 (ISYLYYGALGTLTTMLCGALISYLT) threads the bilayer. At 546–618 (GPTKRSSLGP…YLGHDVETNL (73 aa)) the chain is on the cytoplasmic side. At Ser-551 the chain carries Phosphoserine; by PKA. A disordered region spans residues 587 to 618 (EDIPAVTKKPPGLKPGAETHPLYLGHDVETNL).

It belongs to the sodium:solute symporter (SSF) (TC 2.A.21) family. In terms of assembly, monomer.

The protein resides in the cell membrane. It localises to the cytoplasm. It catalyses the reaction iodide(out) + 2 Na(+)(out) = iodide(in) + 2 Na(+)(in). The enzyme catalyses chlorate(out) + 2 Na(+)(out) = chlorate(in) + 2 Na(+)(in). It carries out the reaction thiocyanate(out) + 2 Na(+)(out) = thiocyanate(in) + 2 Na(+)(in). The catalysed reaction is nitrate(out) + 2 Na(+)(out) = nitrate(in) + 2 Na(+)(in). It catalyses the reaction selenocyanate(out) + 2 Na(+)(out) = selenocyanate(in) + 2 Na(+)(in). Its activity is regulated as follows. Perchlorate inhibits iodide transport activity. Oxyanions inhibit iodide transport activity by blocking the binding sites for iodide and one of the sodium ions. Sodium:iodide symporter that mediates the transport of iodide into the thyroid gland. Can also mediate the transport of chlorate, thiocynate, nitrate and selenocynate. This Rattus norvegicus (Rat) protein is Sodium/iodide cotransporter (Slc5a5).